A 327-amino-acid polypeptide reads, in one-letter code: Nocardicin C-9' epimerase (327 aa).

Position 43 is an N6-(pyridoxal phosphate)lysine (Lys43).

It belongs to the ACC deaminase/D-cysteine desulfhydrase family. Pyridoxal 5'-phosphate is required as a cofactor.

The catalysed reaction is isonocardicin C = nocardicin C. The enzyme catalyses isonocardicin A = nocardicin A. It functions in the pathway antibiotic biosynthesis. In terms of biological role, involved in the biosynthesis of the beta-lactam antibiotic nocardicin A. Catalyzes the interconversion of the nocardicin homoseryl side chain in both nocardicin A with isonocardicin A, and nocardicin C with isonocardicin C. In Nocardia uniformis subsp. tsuyamanensis, this protein is Nocardicin C-9' epimerase.